Consider the following 336-residue polypeptide: Fimbrial adhesin PapGII (336 aa).

Residues 1 to 20 form the signal peptide; the sequence is MKKWFPALLFSLCVSGESSA. Intrachain disulfides connect Cys-64–Cys-138 and Cys-217–Cys-249. D-galactose is bound by residues Glu-79 and 124–127; that span reads GYKW.

It belongs to the adhesin PapG family.

The protein resides in the secreted. It is found in the fimbrium. Its function is as follows. Tip adhesin component of type P pili that plays a critical role in kidney infection through targeted interaction with the globoseries glycolipids containing the Gal-alpha(1-4)-Gal disaccharide present on uroepithelial cells. In turn, transcriptionally regulates host gene expression in kidney cells, leading to inflammatory pathway activation and renal tissue damage. Acts thereby as key determinant of invasive uropathogenic E.coli (UPEC), which cause pyelonephritis and urinary-source bacteremia. This Escherichia coli O6:H1 (strain CFT073 / ATCC 700928 / UPEC) protein is Fimbrial adhesin PapGII.